Reading from the N-terminus, the 250-residue chain is HLA class II histocompatibility antigen, DO alpha chain (250 aa).

Positions 1-25 (MALRAGLVLGFHTLMTLLSPQEAGA) are cleaved as a signal peptide. Residues 26 to 110 (TKADHMGSYG…ERSNRSRAIN (85 aa)) form an alpha-1 region. At 26–217 (TKADHMGSYG…VPIPPPDAME (192 aa)) the chain is on the extracellular side. N104 and N144 each carry an N-linked (GlcNAc...) asparagine glycan. The segment at 111 to 204 (VPPRVTVLPK…GLDAPLLRHW (94 aa)) is alpha-2. Residues 113–205 (PRVTVLPKSR…LDAPLLRHWE (93 aa)) form the Ig-like C1-type domain. C133 and C189 form a disulfide bridge. The tract at residues 205–217 (ELQVPIPPPDAME) is connecting peptide. A helical membrane pass occupies residues 218–240 (TLVCALGLAIGLVGFLVGTVLII). At 241–250 (MGTYVSSVPR) the chain is on the cytoplasmic side.

This sequence belongs to the MHC class II family. Heterodimer of an alpha chain (DOA) and a beta chain (DOB). Forms a heterotetrameric complex with an HLA-DM molecule during intracellular transport in endosomal/lysosomal compartments in B-cells.

The protein localises to the endosome membrane. The protein resides in the lysosome membrane. Important modulator in the HLA class II restricted antigen presentation pathway by interaction with the HLA-DM molecule in B-cells. Modifies peptide exchange activity of HLA-DM. This Homo sapiens (Human) protein is HLA class II histocompatibility antigen, DO alpha chain (HLA-DOA).